Reading from the N-terminus, the 299-residue chain is Tyrosine recombinase XerC (299 aa).

The Core-binding (CB) domain occupies 1–86; that stretch reads MRNELLDFLE…AIRSLFKFLT (86 aa). The 187-residue stretch at 107-293 folds into the Tyr recombinase domain; sequence KLPEFLSIEE…NQARMTEVYN (187 aa). Catalysis depends on residues arginine 146, lysine 170, histidine 245, arginine 248, and histidine 271. The active-site O-(3'-phospho-DNA)-tyrosine intermediate is tyrosine 280.

This sequence belongs to the 'phage' integrase family. XerC subfamily. In terms of assembly, forms a cyclic heterotetrameric complex composed of two molecules of XerC and two molecules of XerD.

The protein localises to the cytoplasm. Its function is as follows. Site-specific tyrosine recombinase, which acts by catalyzing the cutting and rejoining of the recombining DNA molecules. The XerC-XerD complex is essential to convert dimers of the bacterial chromosome into monomers to permit their segregation at cell division. It also contributes to the segregational stability of plasmids. This Natranaerobius thermophilus (strain ATCC BAA-1301 / DSM 18059 / JW/NM-WN-LF) protein is Tyrosine recombinase XerC.